A 489-amino-acid polypeptide reads, in one-letter code: Cytochrome P450 71A26 (489 aa).

The chain crosses the membrane as a helical span at residues 1 to 21 (MMIMFFLLCSIIFVVTIIIFR). Residue Cys431 participates in heme binding.

The protein belongs to the cytochrome P450 family. Heme serves as cofactor.

The protein localises to the membrane. This is Cytochrome P450 71A26 (CYP71A26) from Arabidopsis thaliana (Mouse-ear cress).